The chain runs to 277 residues: MAIKKFKPTTPSRRFMTVSAFDEITRREPEKSLLAPLKKTGGRNSYGRVTVRHRGGGHKRRYRIIDFKRDKDGVPARVASIEYDPNRSARIALLHYVDGEKRYILAPNKLQVGDTVKSGEDAEIKPGNALKLKNIPVGTIIHNIELKPGKGGQLARAAGTMAQILAKEGKYAHIKLPSGEVRLISLECKATIGQVGNIDHENISIGKAGRKRWLGKRPHVRGVAMNPVDHPHGGGEGRTSTGRHPVTPWGKRTLGKKTRKRKASDKYIIRSRRARKR.

A disordered region spans residues 223–277; it reads VAMNPVDHPHGGGEGRTSTGRHPVTPWGKRTLGKKTRKRKASDKYIIRSRRARKR. Residues 253–277 are compositionally biased toward basic residues; that stretch reads TLGKKTRKRKASDKYIIRSRRARKR.

The protein belongs to the universal ribosomal protein uL2 family. As to quaternary structure, part of the 50S ribosomal subunit. Forms a bridge to the 30S subunit in the 70S ribosome.

In terms of biological role, one of the primary rRNA binding proteins. Required for association of the 30S and 50S subunits to form the 70S ribosome, for tRNA binding and peptide bond formation. It has been suggested to have peptidyltransferase activity; this is somewhat controversial. Makes several contacts with the 16S rRNA in the 70S ribosome. The sequence is that of Large ribosomal subunit protein uL2 from Halothermothrix orenii (strain H 168 / OCM 544 / DSM 9562).